Here is a 133-residue protein sequence, read N- to C-terminus: NADH dehydrogenase [ubiquinone] 1 alpha subcomplex subunit 6 (133 aa).

It belongs to the complex I LYR family. Complex I is composed of at least 49 different subunits.

Its subcellular location is the mitochondrion inner membrane. Functionally, accessory subunit of the mitochondrial membrane respiratory chain NADH dehydrogenase (Complex I), that is believed to be not involved in catalysis. Complex I functions in the transfer of electrons from NADH to the respiratory chain. The immediate electron acceptor for the enzyme is believed to be ubiquinone. This chain is NADH dehydrogenase [ubiquinone] 1 alpha subcomplex subunit 6, found in Arabidopsis thaliana (Mouse-ear cress).